The sequence spans 420 residues: Aminoacyltransferase FemA (420 aa).

Belongs to the FemABX family. Homodimer. Interacts with FemB.

It localises to the cytoplasm. It carries out the reaction beta-D-GlcNAc-(1-&gt;4)-Mur2Ac(oyl-L-Ala-D-isoglutaminyl-L-Lys-(N(6)-Gly)-D-Ala-D-Ala)-di-trans,octa-cis-undecaprenyl diphosphate + 2 glycyl-tRNA(Gly) = MurNAc-L-Ala-D-isoglutaminyl-L-Lys-(N(6)-tri-Gly)-D-Ala-D-Ala-diphospho-di-trans,octa-cis-undecaprenyl-GlcNAc + 2 tRNA(Gly) + 2 H(+). Functionally, catalyzes the formation of the pentaglycine interpeptide bridge, which is characteristic of the S.aureus peptidoglycan. Adds glycines 2 and 3 of the pentaglycine bridge, using glycyl-tRNA(Gly) as donor. Involved in resistance to methicillin. The polypeptide is Aminoacyltransferase FemA (femA) (Staphylococcus aureus (strain NCTC 8325 / PS 47)).